The sequence spans 333 residues: Ketol-acid reductoisomerase (NADP(+)) (333 aa).

The region spanning 1–179 (MFYDDDADLT…GGTRAGVIKT (179 aa)) is the KARI N-terminal Rossmann domain. NADP(+) is bound by residues 22–25 (YGSQ), K45, S48, S50, and 80–83 (DTAQ). The active site involves H105. G131 lines the NADP(+) pocket. The 146-residue stretch at 180–325 (TFKDETETDL…KRLRDLMSWV (146 aa)) folds into the KARI C-terminal knotted domain. D188, E192, E224, and E228 together coordinate Mg(2+). A substrate-binding site is contributed by S249.

Belongs to the ketol-acid reductoisomerase family. Mg(2+) is required as a cofactor.

It catalyses the reaction (2R)-2,3-dihydroxy-3-methylbutanoate + NADP(+) = (2S)-2-acetolactate + NADPH + H(+). The catalysed reaction is (2R,3R)-2,3-dihydroxy-3-methylpentanoate + NADP(+) = (S)-2-ethyl-2-hydroxy-3-oxobutanoate + NADPH + H(+). The protein operates within amino-acid biosynthesis; L-isoleucine biosynthesis; L-isoleucine from 2-oxobutanoate: step 2/4. Its pathway is amino-acid biosynthesis; L-valine biosynthesis; L-valine from pyruvate: step 2/4. Functionally, involved in the biosynthesis of branched-chain amino acids (BCAA). Catalyzes an alkyl-migration followed by a ketol-acid reduction of (S)-2-acetolactate (S2AL) to yield (R)-2,3-dihydroxy-isovalerate. In the isomerase reaction, S2AL is rearranged via a Mg-dependent methyl migration to produce 3-hydroxy-3-methyl-2-ketobutyrate (HMKB). In the reductase reaction, this 2-ketoacid undergoes a metal-dependent reduction by NADPH to yield (R)-2,3-dihydroxy-isovalerate. This chain is Ketol-acid reductoisomerase (NADP(+)), found in Mycobacterium avium (strain 104).